Consider the following 312-residue polypeptide: Ribonuclease Z (312 aa).

Zn(2+) contacts are provided by His62, His64, Asp66, His67, His144, Asp215, and His273. Asp66 (proton acceptor) is an active-site residue.

Belongs to the RNase Z family. As to quaternary structure, homodimer. Zn(2+) serves as cofactor.

The enzyme catalyses Endonucleolytic cleavage of RNA, removing extra 3' nucleotides from tRNA precursor, generating 3' termini of tRNAs. A 3'-hydroxy group is left at the tRNA terminus and a 5'-phosphoryl group is left at the trailer molecule.. In terms of biological role, zinc phosphodiesterase, which displays some tRNA 3'-processing endonuclease activity. Probably involved in tRNA maturation, by removing a 3'-trailer from precursor tRNA. This is Ribonuclease Z from Prochlorococcus marinus subsp. pastoris (strain CCMP1986 / NIES-2087 / MED4).